The primary structure comprises 317 residues: Protein CbxX, chromosomal (317 aa).

A disordered region spans residues 1 to 21 (MSAPETTAPLQPPAAPAASLP). 85-92 (GNPGTGKT) serves as a coordination point for ATP.

This sequence belongs to the CbxX/CfxQ family.

Functionally, seems to be necessary for the expression of RuBisCO. The polypeptide is Protein CbxX, chromosomal (cbxXC) (Cupriavidus necator (strain ATCC 17699 / DSM 428 / KCTC 22496 / NCIMB 10442 / H16 / Stanier 337) (Ralstonia eutropha)).